We begin with the raw amino-acid sequence, 356 residues long: S-adenosylmethionine:tRNA ribosyltransferase-isomerase (356 aa).

This sequence belongs to the QueA family. In terms of assembly, monomer.

It localises to the cytoplasm. The catalysed reaction is 7-aminomethyl-7-carbaguanosine(34) in tRNA + S-adenosyl-L-methionine = epoxyqueuosine(34) in tRNA + adenine + L-methionine + 2 H(+). It participates in tRNA modification; tRNA-queuosine biosynthesis. In terms of biological role, transfers and isomerizes the ribose moiety from AdoMet to the 7-aminomethyl group of 7-deazaguanine (preQ1-tRNA) to give epoxyqueuosine (oQ-tRNA). This is S-adenosylmethionine:tRNA ribosyltransferase-isomerase from Escherichia coli (strain 55989 / EAEC).